A 212-amino-acid chain; its full sequence is Adenylate kinase (212 aa).

14 to 19 (GSGKGT) contacts ATP. The segment at 34–63 (STGDLFRKKISEDSQFAAQIQNYLSSGSYV) is NMP. Residues threonine 35, arginine 40, 61-63 (SYV), 89-92 (GYPR), and glutamine 96 contribute to the AMP site. The segment at 126 to 163 (QRLFCQKCQKSYNLLLAKPKNELKCDLDSTDLITRNDD) is LID. Arginine 127 lines the ATP pocket. Zn(2+) contacts are provided by cysteine 130 and cysteine 133. 136–137 (SY) contributes to the ATP binding site. Residues cysteine 150 and aspartate 153 each contribute to the Zn(2+) site. The AMP site is built by arginine 160 and arginine 171. Glutamine 199 serves as a coordination point for ATP.

It belongs to the adenylate kinase family. In terms of assembly, monomer.

The protein resides in the cytoplasm. It catalyses the reaction AMP + ATP = 2 ADP. Its pathway is purine metabolism; AMP biosynthesis via salvage pathway; AMP from ADP: step 1/1. Catalyzes the reversible transfer of the terminal phosphate group between ATP and AMP. Plays an important role in cellular energy homeostasis and in adenine nucleotide metabolism. The polypeptide is Adenylate kinase (Mesomycoplasma hyopneumoniae (strain J / ATCC 25934 / NCTC 10110) (Mycoplasma hyopneumoniae)).